A 370-amino-acid polypeptide reads, in one-letter code: Putative methylthioribose-1-phosphate isomerase (370 aa).

Substrate contacts are provided by residues 66–68, R109, and Q217; that span reads RGA. D258 acts as the Proton donor in catalysis. A substrate-binding site is contributed by 268-269; it reads NK.

This sequence belongs to the eIF-2B alpha/beta/delta subunits family. MtnA subfamily.

The catalysed reaction is 5-(methylsulfanyl)-alpha-D-ribose 1-phosphate = 5-(methylsulfanyl)-D-ribulose 1-phosphate. Functionally, catalyzes the interconversion of methylthioribose-1-phosphate (MTR-1-P) into methylthioribulose-1-phosphate (MTRu-1-P). The sequence is that of Putative methylthioribose-1-phosphate isomerase from Aeropyrum pernix (strain ATCC 700893 / DSM 11879 / JCM 9820 / NBRC 100138 / K1).